Reading from the N-terminus, the 340-residue chain is tRNA N6-adenosine threonylcarbamoyltransferase (340 aa).

Residues His111 and His115 each coordinate Fe cation. Substrate contacts are provided by residues 134-138 (LVSGG), Asp167, Gly180, and Asn276. Asp304 serves as a coordination point for Fe cation.

Belongs to the KAE1 / TsaD family. The cofactor is Fe(2+).

Its subcellular location is the cytoplasm. The enzyme catalyses L-threonylcarbamoyladenylate + adenosine(37) in tRNA = N(6)-L-threonylcarbamoyladenosine(37) in tRNA + AMP + H(+). Its function is as follows. Required for the formation of a threonylcarbamoyl group on adenosine at position 37 (t(6)A37) in tRNAs that read codons beginning with adenine. Is involved in the transfer of the threonylcarbamoyl moiety of threonylcarbamoyl-AMP (TC-AMP) to the N6 group of A37, together with TsaE and TsaB. TsaD likely plays a direct catalytic role in this reaction. This chain is tRNA N6-adenosine threonylcarbamoyltransferase, found in Helicobacter pylori (strain ATCC 700392 / 26695) (Campylobacter pylori).